Reading from the N-terminus, the 163-residue chain is Putative 4-hydroxy-4-methyl-2-oxoglutarate aldolase (163 aa).

Residues 79 to 82 (GDQL) and Arg101 contribute to the substrate site. Asp102 contacts a divalent metal cation.

It belongs to the class II aldolase/RraA-like family. As to quaternary structure, homotrimer. A divalent metal cation is required as a cofactor.

It catalyses the reaction 4-hydroxy-4-methyl-2-oxoglutarate = 2 pyruvate. It carries out the reaction oxaloacetate + H(+) = pyruvate + CO2. Functionally, catalyzes the aldol cleavage of 4-hydroxy-4-methyl-2-oxoglutarate (HMG) into 2 molecules of pyruvate. Also contains a secondary oxaloacetate (OAA) decarboxylase activity due to the common pyruvate enolate transition state formed following C-C bond cleavage in the retro-aldol and decarboxylation reactions. The chain is Putative 4-hydroxy-4-methyl-2-oxoglutarate aldolase from Dechloromonas aromatica (strain RCB).